Here is a 315-residue protein sequence, read N- to C-terminus: Porphobilinogen deaminase (315 aa).

C234 carries the S-(dipyrrolylmethanemethyl)cysteine modification.

The protein belongs to the HMBS family. As to quaternary structure, monomer. The cofactor is dipyrromethane.

It catalyses the reaction 4 porphobilinogen + H2O = hydroxymethylbilane + 4 NH4(+). It participates in porphyrin-containing compound metabolism; protoporphyrin-IX biosynthesis; coproporphyrinogen-III from 5-aminolevulinate: step 2/4. In terms of biological role, tetrapolymerization of the monopyrrole PBG into the hydroxymethylbilane pre-uroporphyrinogen in several discrete steps. In Mycolicibacterium paratuberculosis (strain ATCC BAA-968 / K-10) (Mycobacterium paratuberculosis), this protein is Porphobilinogen deaminase.